A 398-amino-acid chain; its full sequence is Subtilisin-like protease CPC735_050320 (398 aa).

The first 19 residues, 1-19 (MVFLGKILPLALAALSVNG), serve as a signal peptide directing secretion. Positions 20–117 (AEILSAPGAE…IERDQIMKAS (98 aa)) are excised as a propeptide. The region spanning 35-115 (YIVVMKEGTS…AYIERDQIMK (81 aa)) is the Inhibitor I9 domain. A Peptidase S8 domain is found at 127 to 398 (SWGLARVSSR…NRLINNGVSQ (272 aa)). Active-site charge relay system residues include Asp-159 and His-190. N-linked (GlcNAc...) asparagine glycosylation is found at Asn-220 and Asn-250. Ser-344 serves as the catalytic Charge relay system.

The protein belongs to the peptidase S8 family.

The protein resides in the secreted. Its function is as follows. Secreted subtilisin-like serine protease with keratinolytic activity that contributes to pathogenicity. The protein is Subtilisin-like protease CPC735_050320 of Coccidioides posadasii (strain C735) (Valley fever fungus).